We begin with the raw amino-acid sequence, 80 residues long: Defensin-like protein 291 (80 aa).

Residues 1-29 form the signal peptide; sequence MAASKTTIFIVFVLCLSCTLLVNISGIQA. 3 cysteine pairs are disulfide-bonded: C50-C70, C56-C75, and C62-C77.

It belongs to the DEFL family.

The protein resides in the secreted. This chain is Defensin-like protein 291, found in Arabidopsis thaliana (Mouse-ear cress).